The primary structure comprises 344 residues: Galactoside alpha-(1,2)-fucosyltransferase 2 (344 aa).

Residues 1–7 (MFSTQTF) lie on the Cytoplasmic side of the membrane. The chain crosses the membrane as a helical; Signal-anchor for type II membrane protein span at residues 8–28 (FFFPTAPFILFVFTASTIFHL). Topologically, residues 29–344 (HQRLEKMQPT…PADLSPLLKH (316 aa)) are lumenal. Residues asparagine 189, asparagine 255, asparagine 283, and asparagine 309 are each glycosylated (N-linked (GlcNAc...) asparagine).

Expressed in brain, heart, lung, intestin and kidney.

The protein localises to the golgi apparatus. Its subcellular location is the golgi stack membrane. It carries out the reaction a beta-D-galactosyl-(1-&gt;3)-N-acetyl-beta-D-glucosaminyl derivative + GDP-beta-L-fucose = an alpha-L-Fuc-(1-&gt;2)-beta-D-Gal-(1-&gt;3)-beta-D-GlcNAc derivative + GDP + H(+). It catalyses the reaction a beta-D-galactosyl-(1-&gt;4)-N-acetyl-beta-D-glucosaminyl derivative + GDP-beta-L-fucose = an alpha-L-Fuc-(1-&gt;2)-beta-D-Gal-(1-&gt;4)-beta-D-GlcNAc derivative + GDP + H(+). The catalysed reaction is a ganglioside GM1 + GDP-beta-L-fucose = a ganglioside Fuc-GM1 + GDP + H(+). The enzyme catalyses a neolactoside nLc4Cer + GDP-beta-L-fucose = a neolactoside IV(2)-alpha-Fuc-nLc4Cer + GDP + H(+). It carries out the reaction a neolactoside nLc4Cer(d18:1(4E)) + GDP-beta-L-fucose = a neolactoside IV(2)-alpha-Fuc-nLc4Cer(d18:1(4E)) + GDP + H(+). It catalyses the reaction a ganglioside GA1 + GDP-beta-L-fucose = a ganglioside Fuc-GA1 + GDP + H(+). The catalysed reaction is Lc4Cer + GDP-beta-L-fucose = alpha-L-fucosyl-(1-&gt;2)-beta-D-galactosyl-(1-&gt;3)-N-acetyl-beta-D-glucosaminyl-(1-&gt;3)-beta-D-galactosyl-(1-&gt;4)-beta-D-glucosyl-(1&lt;-&gt;1')-ceramide + GDP + H(+). The enzyme catalyses a beta-D-Gal-(1-&gt;3)-beta-D-GlcNAc-(1-&gt;3)-beta-D-Gal-(1-&gt;4)-beta-D-Glc-(1&lt;-&gt;1')-Cer(d18:1(4E)) + GDP-beta-L-fucose = alpha-L-fucosyl-(1-&gt;2)- beta-D-galactosyl-(1-&gt;3)-N-acetyl-beta-D-glucosaminyl-(1-&gt;3)-beta-D-galactosyl-(1-&gt;4)-beta-D-glucosyl-(1&lt;-&gt;1')-N-acylsphing-4-enine + GDP + H(+). It carries out the reaction a ganglioside GD1b + GDP-beta-L-fucose = a ganglioside Fuc-GD1b + GDP + H(+). It catalyses the reaction a ganglioside GM1 (d18:1(4E)) + GDP-beta-L-fucose = a ganglioside Fuc-GM1 (d18:1(4E)) + GDP + H(+). The catalysed reaction is a globoside GalGb4Cer (d18:1(4E)) + GDP-beta-L-fucose = a globoside Globo-H (d18:1(4E)) + GDP + H(+). The enzyme catalyses a lactoside III(4)-a-Fuc-Lc4Cer + GDP-beta-L-fucose = a lactoside IV(2),III(4)-a-[Fuc]2-Lc4Cer + GDP + H(+). It carries out the reaction beta-D-galactosyl-(1-&gt;3)-N-acetyl-D-galactosamine + GDP-beta-L-fucose = alpha-L-fucosyl-(1-&gt;2)-beta-D-galactosyl-(1-&gt;3)-N-acetyl-D-galactosamine + GDP + H(+). It functions in the pathway protein modification; protein glycosylation. Catalyzes the transfer of L-fucose, from a guanosine diphosphate-beta-L-fucose, to the terminal galactose on both O- and N-linked glycans chains of cell surface glycoproteins and glycolipids and the resulting epitope regulates several processes such as cell-cell interaction including host-microbe interaction, cell surface expression and cell proliferation. Preferentially fucosylates gangliosides GA1 and GM1 in the antrum, cecum and colon and in the female reproductive organs. Fucosylated host glycoproteins or glycolipids mediate interaction with intestinal microbiota influencing its composition. Creates a soluble precursor oligosaccharide FuC-alpha ((1,2)Galbeta-) called the H antigen which is an essential substrate for the final step in the soluble ABO blood group antigen synthesis pathway. The protein is Galactoside alpha-(1,2)-fucosyltransferase 2 of Bos taurus (Bovine).